A 100-amino-acid polypeptide reads, in one-letter code: Urease subunit gamma (100 aa).

Belongs to the urease gamma subunit family. As to quaternary structure, heterotrimer of UreA (gamma), UreB (beta) and UreC (alpha) subunits. Three heterotrimers associate to form the active enzyme.

It is found in the cytoplasm. The enzyme catalyses urea + 2 H2O + H(+) = hydrogencarbonate + 2 NH4(+). It functions in the pathway nitrogen metabolism; urea degradation; CO(2) and NH(3) from urea (urease route): step 1/1. The protein is Urease subunit gamma of Synechocystis sp. (strain ATCC 27184 / PCC 6803 / Kazusa).